The sequence spans 200 residues: LexA repressor (200 aa).

A DNA-binding region (H-T-H motif) is located at residues Arg-28–Lys-48. Active-site for autocatalytic cleavage activity residues include Ser-117 and Lys-154.

This sequence belongs to the peptidase S24 family. Homodimer.

The catalysed reaction is Hydrolysis of Ala-|-Gly bond in repressor LexA.. Its function is as follows. Represses a number of genes involved in the response to DNA damage (SOS response), including recA and lexA. In the presence of single-stranded DNA, RecA interacts with LexA causing an autocatalytic cleavage which disrupts the DNA-binding part of LexA, leading to derepression of the SOS regulon and eventually DNA repair. In Thiobacillus denitrificans (strain ATCC 25259 / T1), this protein is LexA repressor.